A 198-amino-acid polypeptide reads, in one-letter code: Recombination protein RecR (198 aa).

A C4-type zinc finger spans residues 57–72 (CSICGNLTESDPCAIC). The 96-residue stretch at 80–175 (TTILVVEESK…KVTRLARGLA (96 aa)) folds into the Toprim domain.

The protein belongs to the RecR family.

May play a role in DNA repair. It seems to be involved in an RecBC-independent recombinational process of DNA repair. It may act with RecF and RecO. This chain is Recombination protein RecR, found in Lactococcus lactis subsp. lactis (strain IL1403) (Streptococcus lactis).